Here is a 448-residue protein sequence, read N- to C-terminus: MNKPNEITLSPHWEDRISNEQKLRRNDQRSVFQRDRARILHSAAFRRLQAKTQVHGPGSANDFYRTRLTHSLEVSQIGTGVVAQLKLRQPEFRALLTSTSLMESICLAHDIGHPPFGHGGEIALNYMMRDHGGFEGNGQTLRILSKLEPYTEHFGMNLARRTLLGVLKYPAFLDQVHSTERPQEVSNVRHLKSIDWHPPKGVYRDDADILNWILKPLSDVDKALFSTFRFQQESQHTHRKTRFKSIDCSIMELADDIAYGVHDLEDAIVMGIVTRNQWQESVASKLAECGDEWFEANIETISDKLFSGLQYQRKDGIGSIVNALLTSITIKPTTFNDEPEFESELLRWNAFLSPSMSYALEVLKKFVGQFVIHNSEMQRIEYKGQQIVMEIFDALNSDPERLLPENDKREWREAKESGANAHRVIADYIAGMTDGYAQRLYNQLFVPI.

The 194-residue stretch at 67–260 folds into the HD domain; sequence RLTHSLEVSQ…MELADDIAYG (194 aa).

The protein belongs to the dGTPase family. Type 2 subfamily.

The chain is Deoxyguanosinetriphosphate triphosphohydrolase-like protein from Aliivibrio fischeri (strain MJ11) (Vibrio fischeri).